Reading from the N-terminus, the 1270-residue chain is DNA-directed RNA polymerase subunit beta (1270 aa).

It belongs to the RNA polymerase beta chain family. The RNAP catalytic core consists of 2 alpha, 1 beta, 1 beta' and 1 omega subunit. When a sigma factor is associated with the core the holoenzyme is formed, which can initiate transcription.

The enzyme catalyses RNA(n) + a ribonucleoside 5'-triphosphate = RNA(n+1) + diphosphate. In terms of biological role, DNA-dependent RNA polymerase catalyzes the transcription of DNA into RNA using the four ribonucleoside triphosphates as substrates. This Bacteroides thetaiotaomicron (strain ATCC 29148 / DSM 2079 / JCM 5827 / CCUG 10774 / NCTC 10582 / VPI-5482 / E50) protein is DNA-directed RNA polymerase subunit beta.